The sequence spans 100 residues: Suppressor of silencing 2b (100 aa).

A Nuclear localization signal motif is present at residues 22-27 (KRRRRR).

This sequence belongs to the cucumovirus/ilarvirus protein 2b family. As to quaternary structure, homotetramer. Interacts with host AGO1; this interaction blocks AGO1 cleavage activity to attenuate RNA silencing and thus counter host defense. Interacts with host JAZ.

It localises to the host nucleus. In terms of biological role, multifunctional protein that plays two independent roles: viral suppressor of host RNAi (VSR) and viral inducer of host attractiveness to insect vectors (VIA). Acts as a suppressor of RNA-mediated gene silencing, also known as post-transcriptional gene silencing (PTGS), a mechanism of plant viral defense that limits the accumulation of viral RNAs. May directly interfere with mobile silencing signaling. Also inhibits signal transduction by the phytohormone jasmonate, making the infected plant more attractive to aphids, which are the second host to play a role as a dissemination vector. Acts by binding to and inhibiting JAZ degradation in the host. The chain is Suppressor of silencing 2b from Cucumis sativus (Cucumber).